The sequence spans 216 residues: GTP cyclohydrolase-2 (216 aa).

51–55 (RIHSE) serves as a coordination point for GTP. 3 residues coordinate Zn(2+): Cys56, Cys67, and Cys69. Residues Gln72, 94 to 96 (EGR), and Thr116 each bind GTP. The Proton acceptor role is filled by Asp128. Arg130 serves as the catalytic Nucleophile. The GTP site is built by Thr151 and Lys156.

The protein belongs to the GTP cyclohydrolase II family. Zn(2+) is required as a cofactor.

It catalyses the reaction GTP + 4 H2O = 2,5-diamino-6-hydroxy-4-(5-phosphoribosylamino)-pyrimidine + formate + 2 phosphate + 3 H(+). Its pathway is cofactor biosynthesis; riboflavin biosynthesis; 5-amino-6-(D-ribitylamino)uracil from GTP: step 1/4. Its function is as follows. Catalyzes the conversion of GTP to 2,5-diamino-6-ribosylamino-4(3H)-pyrimidinone 5'-phosphate (DARP), formate and pyrophosphate. The protein is GTP cyclohydrolase-2 of Haemophilus influenzae (strain 86-028NP).